The primary structure comprises 282 residues: Ribosome biogenesis GTPase A (282 aa).

In terms of domain architecture, CP-type G spans 14 to 178 (RREVTEKLKL…LLDTPGILWP (165 aa)). GTP-binding positions include 58–61 (NKAD), 86–87 (NS), 130–135 (NVGKST), and G174.

It belongs to the TRAFAC class YlqF/YawG GTPase family. MTG1 subfamily. As to quaternary structure, interacts with ctc. Interacts with the immature 50S ribosome subunit. 2 molecules of rbgA bind to one 50S subunit.

The protein localises to the cytoplasm. In terms of biological role, essential protein that is required for a late step of 50S ribosomal subunit assembly. Has GTPase activity that is stimulated by interaction with the immature 50S ribosome subunit. Binds to the 23S rRNA. Required for the association of ribosomal proteins rplP and rpmA with the large subunit. The sequence is that of Ribosome biogenesis GTPase A from Bacillus pumilus (strain SAFR-032).